The following is a 428-amino-acid chain: Histone deacetylase 3 (428 aa).

Residues 3 to 316 are histone deacetylase; the sequence is KTVAYFYDPD…WTYETSLLVE (314 aa). His-17, Gly-21, and Lys-25 together coordinate 1D-myo-inositol 1,4,5,6-tetrakisphosphate. His-135 is a catalytic residue. Residues Asp-170, His-172, and Asp-259 each contribute to the Zn(2+) site. Arg-265 provides a ligand contact to 1D-myo-inositol 1,4,5,6-tetrakisphosphate. 2 stretches are compositionally biased toward basic and acidic residues: residues 388 to 405 and 415 to 428; these read DRTD…ENYS and DGDH…DVEI. The interval 388 to 428 is disordered; sequence DRTDEADAEERGPEENYSRPEAPNEFYDGDHDNDKESDVEI. At Ser-424 the chain carries Phosphoserine.

This sequence belongs to the histone deacetylase family. HD type 1 subfamily. As to quaternary structure, interacts with HDAC7 and HDAC9. Interacts with HDAC10, DAXX and DACH1. Found in a complex with NCOR1 and NCOR2. Component of the N-Cor repressor complex, at least composed of NCOR1, NCOR2, HDAC3, TBL1X, TBL1R, CORO2A and GPS2. Interacts with BCOR, MJD2A/JHDM3A, NRIP1, PRDM6 and SRY. Interacts with BTBD14B. Interacts with GLIS2. Interacts (via the DNA-binding domain) with NR2C1; the interaction recruits phosphorylated NR2C1 to PML bodies for sumoylation. Component of the Notch corepressor complex. Interacts with CBFA2T3 and NKAP. Interacts with APEX1; the interaction is not dependent on the acetylated status of APEX1. Interacts with and deacetylates MAPK14. Interacts with ZMYND15. Interacts with SMRT/NCOR2 and BCL6 on DNA enhancer elements. Interacts with INSM1. Interacts with XBP1; the interaction occurs in endothelial cell (EC) under disturbed flow. Interacts (via C-terminus) with CCAR2 (via N-terminus). Interacts with and deacetylates MEF2D. Interacts with BEND3. Interacts with NKAPL. Interacts with DHX36; this interaction occurs in a RNA-dependent manner. Interacts weakly with CRY1; this interaction is enhanced in the presence of FBXL3. Interacts with FBXL3 and BMAL1. Interacts with NCOR1. Interacts with RARA. Interacts with SETD5. In terms of processing, deubiquitinated on 'Lys-63'-linked ubiquitin chains by USP38; leading to a decreased level of histone acetylation. Sumoylated in vitro.

Its subcellular location is the nucleus. The protein localises to the chromosome. It localises to the cytoplasm. The protein resides in the cytosol. The enzyme catalyses N(6)-acetyl-L-lysyl-[histone] + H2O = L-lysyl-[histone] + acetate. It carries out the reaction N(6)-acetyl-L-lysyl-[protein] + H2O = L-lysyl-[protein] + acetate. The catalysed reaction is N(6)-(2E)-butenoyl-L-lysyl-[protein] + H2O = (2E)-2-butenoate + L-lysyl-[protein]. It catalyses the reaction N(6)-(2-hydroxyisobutanoyl)-L-lysyl-[protein] + H2O = 2-hydroxy-2-methylpropanoate + L-lysyl-[protein]. The enzyme catalyses N(6)-[(S)-lactoyl]-L-lysyl-[protein] + H2O = (S)-lactate + L-lysyl-[protein]. With respect to regulation, inositol tetraphosphate (1D-myo-inositol 1,4,5,6-tetrakisphosphate) promotes the histone deacetylase activity by acting as an intermolecular glue between HDAC3 and NCOR2, thereby promoting its association with the N-Cor complex, a prerequisite for the histone deacetylase activity. Histone deacetylase that catalyzes the deacetylation of lysine residues on the N-terminal part of the core histones (H2A, H2B, H3 and H4), and some other non-histone substrates. Histone deacetylation gives a tag for epigenetic repression and plays an important role in transcriptional regulation, cell cycle progression and developmental events. Histone deacetylases act via the formation of large multiprotein complexes, such as N-Cor repressor complex, which activate the histone deacetylase activity. Participates in the BCL6 transcriptional repressor activity by deacetylating the H3 'Lys-27' (H3K27) on enhancer elements, antagonizing EP300 acetyltransferase activity and repressing proximal gene expression. Acts as a molecular chaperone for shuttling phosphorylated NR2C1 to PML bodies for sumoylation. Contributes, together with XBP1 isoform 1, to the activation of NFE2L2-mediated HMOX1 transcription factor gene expression in a PI(3)K/mTORC2/Akt-dependent signaling pathway leading to endothelial cell (EC) survival under disturbed flow/oxidative stress. Regulates both the transcriptional activation and repression phases of the circadian clock in a deacetylase activity-independent manner. During the activation phase, promotes the accumulation of ubiquitinated BMAL1 at the E-boxes and during the repression phase, blocks FBXL3-mediated CRY1/2 ubiquitination and promotes the interaction of CRY1 and BMAL1. The NCOR1-HDAC3 complex regulates the circadian expression of the core clock gene BMAL1 and the genes involved in lipid metabolism in the liver. Also functions as a deacetylase for non-histone targets, such as KAT5, MEF2D, MAPK14, RARA and STAT3. Serves as a corepressor of RARA, mediating its deacetylation and repression, leading to inhibition of RARE DNA element binding. In association with RARA, plays a role in the repression of microRNA-10a and thereby in the inflammatory response. In addition to protein deacetylase activity, also acts as a protein-lysine deacylase by recognizing other acyl groups: catalyzes removal of (2E)-butenoyl (crotonyl), lactoyl (lactyl) and 2-hydroxyisobutanoyl (2-hydroxyisobutyryl) acyl groups from lysine residues, leading to protein decrotonylation, delactylation and de-2-hydroxyisobutyrylation, respectively. Catalyzes decrotonylation of MAPRE1/EB1. Mediates delactylation NBN/NBS1, thereby inhibiting DNA double-strand breaks (DSBs) via homologous recombination (HR). The chain is Histone deacetylase 3 (HDAC3) from Pongo abelii (Sumatran orangutan).